A 365-amino-acid polypeptide reads, in one-letter code: MPEITVRAKSKTYPVYINEFALEDVREKWTESLAKFSHVFVLTDEHVAELHKAKLDAVLADLPVVTYYVAPNGEEAKTFRVYEDVMTKLIETGLDRKAVLIAFGGGVIGDLGGFVAATYMRGIPFYQVPTTVLAHDSAVGGKVAINHPLGKNMIGNFYQPEAVIYDTQFFATLPEREMRSGFAEMIKHALISDQTLLRALMDTFTEPKDFYTKDLTPFLQRGIEIKANIVAQDETEQGVRAYLNFGHTFGHALEAYGNFGKWLHGEAITYGMIYALTMSEAIYGLDFDLAEFKTWLKQLGYDTTFDATVPFSKILENMRHDKKTTFNEISMVLLEEIGKPVIFKAEDDLIFETYKRVMRNGGNGI.

Residues 106–110, 130–131, lysine 142, lysine 151, and 169–172 each bind NAD(+); these read GVIGD, TT, and FFAT. The Zn(2+) site is built by glutamate 184, histidine 247, and histidine 264.

It belongs to the sugar phosphate cyclases superfamily. Dehydroquinate synthase family. The cofactor is Co(2+). It depends on Zn(2+) as a cofactor. NAD(+) serves as cofactor.

The protein localises to the cytoplasm. The enzyme catalyses 7-phospho-2-dehydro-3-deoxy-D-arabino-heptonate = 3-dehydroquinate + phosphate. The protein operates within metabolic intermediate biosynthesis; chorismate biosynthesis; chorismate from D-erythrose 4-phosphate and phosphoenolpyruvate: step 2/7. Its function is as follows. Catalyzes the conversion of 3-deoxy-D-arabino-heptulosonate 7-phosphate (DAHP) to dehydroquinate (DHQ). The protein is 3-dehydroquinate synthase of Listeria monocytogenes serotype 4a (strain HCC23).